A 404-amino-acid chain; its full sequence is Probable tRNA sulfurtransferase (404 aa).

Residues 60-165 form the THUMP domain; it reads QPVAESLKQI…EEAAYISYET (106 aa). ATP is bound by residues 183–184, 208–209, R265, G287, and Q296; these read ML and HF.

It belongs to the ThiI family.

The protein localises to the cytoplasm. It carries out the reaction [ThiI sulfur-carrier protein]-S-sulfanyl-L-cysteine + a uridine in tRNA + 2 reduced [2Fe-2S]-[ferredoxin] + ATP + H(+) = [ThiI sulfur-carrier protein]-L-cysteine + a 4-thiouridine in tRNA + 2 oxidized [2Fe-2S]-[ferredoxin] + AMP + diphosphate. The enzyme catalyses [ThiS sulfur-carrier protein]-C-terminal Gly-Gly-AMP + S-sulfanyl-L-cysteinyl-[cysteine desulfurase] + AH2 = [ThiS sulfur-carrier protein]-C-terminal-Gly-aminoethanethioate + L-cysteinyl-[cysteine desulfurase] + A + AMP + 2 H(+). The protein operates within cofactor biosynthesis; thiamine diphosphate biosynthesis. Functionally, catalyzes the ATP-dependent transfer of a sulfur to tRNA to produce 4-thiouridine in position 8 of tRNAs, which functions as a near-UV photosensor. Also catalyzes the transfer of sulfur to the sulfur carrier protein ThiS, forming ThiS-thiocarboxylate. This is a step in the synthesis of thiazole, in the thiamine biosynthesis pathway. The sulfur is donated as persulfide by IscS. This Streptococcus gordonii (strain Challis / ATCC 35105 / BCRC 15272 / CH1 / DL1 / V288) protein is Probable tRNA sulfurtransferase.